A 115-amino-acid polypeptide reads, in one-letter code: NADH-ubiquinone oxidoreductase chain 3 (115 aa).

The next 3 helical transmembrane spans lie at 3–23 (VMLALLTNTLLSTLLVLIAFW), 55–75 (FFLVAITFLLFDLEIALLLPL), and 84–104 (LPTMLTMALLLISLLAASLAY).

This sequence belongs to the complex I subunit 3 family. As to quaternary structure, core subunit of respiratory chain NADH dehydrogenase (Complex I) which is composed of 45 different subunits. Interacts with TMEM186. Interacts with TMEM242.

Its subcellular location is the mitochondrion inner membrane. It carries out the reaction a ubiquinone + NADH + 5 H(+)(in) = a ubiquinol + NAD(+) + 4 H(+)(out). Functionally, core subunit of the mitochondrial membrane respiratory chain NADH dehydrogenase (Complex I) which catalyzes electron transfer from NADH through the respiratory chain, using ubiquinone as an electron acceptor. Essential for the catalytic activity of complex I. The chain is NADH-ubiquinone oxidoreductase chain 3 from Felis catus (Cat).